A 261-amino-acid chain; its full sequence is Carbonic anhydrase 1 (261 aa).

Alanine 2 carries the post-translational modification N-acetylalanine. Residues alanine 4–phenylalanine 261 enclose the Alpha-carbonic anhydrase domain. The active-site Proton donor/acceptor is the histidine 65. Zn(2+) is bound by residues histidine 95, histidine 97, and histidine 120. Substrate-binding positions include threonine 200 and threonine 200–histidine 201. Residues alanine 239–phenylalanine 261 are disordered.

This sequence belongs to the alpha-carbonic anhydrase family. Zn(2+) serves as cofactor.

It localises to the cytoplasm. The enzyme catalyses hydrogencarbonate + H(+) = CO2 + H2O. It catalyses the reaction urea = cyanamide + H2O. Inhibited by acetazolamide. Its function is as follows. Catalyzes the reversible hydration of carbon dioxide. Can hydrate cyanamide to urea. This chain is Carbonic anhydrase 1 (Ca1), found in Mus musculus (Mouse).